Consider the following 418-residue polypeptide: Actin-related protein 3 (418 aa).

The residue at position 2 (Ala-2) is an N-acetylalanine.

Belongs to the actin family. ARP3 subfamily. As to quaternary structure, component of the Arp2/3 complex composed of ACTR2/ARP2, ACTR3/ARP3, ARPC1B/p41-ARC, ARPC2/p34-ARC, ARPC3/p21-ARC, ARPC4/p20-ARC and ARPC5/p16-ARC. As to expression, detected in fibroblasts.

The protein localises to the cytoplasm. Its subcellular location is the cytoskeleton. It localises to the cell projection. It is found in the nucleus. In terms of biological role, ATP-binding component of the Arp2/3 complex, a multiprotein complex that mediates actin polymerization upon stimulation by nucleation-promoting factor (NPF). The Arp2/3 complex mediates the formation of branched actin networks in the cytoplasm, providing the force for cell motility. Seems to contact the pointed end of the daughter actin filament. In addition to its role in the cytoplasmic cytoskeleton, the Arp2/3 complex also promotes actin polymerization in the nucleus, thereby regulating gene transcription and repair of damaged DNA. The Arp2/3 complex promotes homologous recombination (HR) repair in response to DNA damage by promoting nuclear actin polymerization, leading to drive motility of double-strand breaks (DSBs). This Gallus gallus (Chicken) protein is Actin-related protein 3 (ACTR3).